The primary structure comprises 366 residues: Holliday junction branch migration complex subunit RuvB (366 aa).

The large ATPase domain (RuvB-L) stretch occupies residues 3–183 (ADGLVSAAAS…FGFTAHLDFY (181 aa)). ATP is bound by residues leucine 22, arginine 23, glycine 64, lysine 67, threonine 68, serine 69, 130–132 (EDF), arginine 173, tyrosine 183, and arginine 220. Threonine 68 contributes to the Mg(2+) binding site. The segment at 184–254 (APDELARVLT…VARAALRIYD (71 aa)) is small ATPAse domain (RuvB-S). The head domain (RuvB-H) stretch occupies residues 257–366 (GLGLDRLDRA…PEDGLHPGGG (110 aa)). The DNA site is built by arginine 312 and arginine 317.

It belongs to the RuvB family. Homohexamer. Forms an RuvA(8)-RuvB(12)-Holliday junction (HJ) complex. HJ DNA is sandwiched between 2 RuvA tetramers; dsDNA enters through RuvA and exits via RuvB. An RuvB hexamer assembles on each DNA strand where it exits the tetramer. Each RuvB hexamer is contacted by two RuvA subunits (via domain III) on 2 adjacent RuvB subunits; this complex drives branch migration. In the full resolvosome a probable DNA-RuvA(4)-RuvB(12)-RuvC(2) complex forms which resolves the HJ.

Its subcellular location is the cytoplasm. The enzyme catalyses ATP + H2O = ADP + phosphate + H(+). In terms of biological role, the RuvA-RuvB-RuvC complex processes Holliday junction (HJ) DNA during genetic recombination and DNA repair, while the RuvA-RuvB complex plays an important role in the rescue of blocked DNA replication forks via replication fork reversal (RFR). RuvA specifically binds to HJ cruciform DNA, conferring on it an open structure. The RuvB hexamer acts as an ATP-dependent pump, pulling dsDNA into and through the RuvAB complex. RuvB forms 2 homohexamers on either side of HJ DNA bound by 1 or 2 RuvA tetramers; 4 subunits per hexamer contact DNA at a time. Coordinated motions by a converter formed by DNA-disengaged RuvB subunits stimulates ATP hydrolysis and nucleotide exchange. Immobilization of the converter enables RuvB to convert the ATP-contained energy into a lever motion, pulling 2 nucleotides of DNA out of the RuvA tetramer per ATP hydrolyzed, thus driving DNA branch migration. The RuvB motors rotate together with the DNA substrate, which together with the progressing nucleotide cycle form the mechanistic basis for DNA recombination by continuous HJ branch migration. Branch migration allows RuvC to scan DNA until it finds its consensus sequence, where it cleaves and resolves cruciform DNA. This chain is Holliday junction branch migration complex subunit RuvB, found in Frankia alni (strain DSM 45986 / CECT 9034 / ACN14a).